The following is a 351-amino-acid chain: Glycerol-1-phosphate dehydrogenase [NAD(P)+] (351 aa).

NAD(+) is bound by residues 97 to 101 (GKVID) and 119 to 122 (TSPS). Substrate is bound at residue D124. S128 serves as a coordination point for NAD(+). D171 lines the substrate pocket. Residues D171 and H251 each coordinate Zn(2+). Substrate is bound at residue H255. Zn(2+) is bound at residue H267.

The protein belongs to the glycerol-1-phosphate dehydrogenase family. Homodimer. Zn(2+) serves as cofactor.

The protein resides in the cytoplasm. It carries out the reaction sn-glycerol 1-phosphate + NAD(+) = dihydroxyacetone phosphate + NADH + H(+). The catalysed reaction is sn-glycerol 1-phosphate + NADP(+) = dihydroxyacetone phosphate + NADPH + H(+). The protein operates within membrane lipid metabolism; glycerophospholipid metabolism. Its function is as follows. Catalyzes the NAD(P)H-dependent reduction of dihydroxyacetonephosphate (DHAP or glycerone phosphate) to glycerol 1-phosphate (G1P). The G1P thus generated is used as the glycerophosphate backbone of phospholipids in the cellular membranes of Archaea. The chain is Glycerol-1-phosphate dehydrogenase [NAD(P)+] from Saccharolobus solfataricus (strain ATCC 35092 / DSM 1617 / JCM 11322 / P2) (Sulfolobus solfataricus).